An 809-amino-acid polypeptide reads, in one-letter code: TPR repeat-containing protein TP_0920 (809 aa).

A disordered region spans residues 103-125; that stretch reads PGEARALPNSEQPEVPASLDSTS. TPR repeat units follow at residues 315 to 348, 383 to 416, 418 to 450, 471 to 504, 513 to 550, 552 to 582, 583 to 616, 656 to 689, and 723 to 756; these read LREY…DPHC, AFLS…DPHQ, LFAL…FLAQ, TEVR…GSAD, LLLR…APDC, LYHF…DPDN, GWLH…LPHE, GQAF…EPQN, and AHVY…WPQC.

This is TPR repeat-containing protein TP_0920 from Treponema pallidum (strain Nichols).